A 130-amino-acid polypeptide reads, in one-letter code: MGDWFMQGSPPDFAVQEDRWLKAVESCHQLFCSCSSAWDHLRNILQTRGYWPQGPPPYRSEPHTEHSRPPPPKKRRPWCGGDGGGDAGAGPSGVAGTAAGGAGGDGAVGPVEEDDPTVADLIAAMEEDER.

A disordered region spans residues 48–130; sequence RGYWPQGPPP…LIAAMEEDER (83 aa). A compositionally biased stretch (gly residues) spans 80-107; sequence GGDGGGDAGAGPSGVAGTAAGGAGGDGA.

This is an uncharacterized protein from Aotus trivirgatus (Three-striped night monkey).